The chain runs to 184 residues: NADH-quinone oxidoreductase subunit B (184 aa).

[4Fe-4S] cluster contacts are provided by cysteine 37, cysteine 38, cysteine 103, and cysteine 132.

This sequence belongs to the complex I 20 kDa subunit family. As to quaternary structure, NDH-1 is composed of 14 different subunits. Subunits NuoB, C, D, E, F, and G constitute the peripheral sector of the complex. It depends on [4Fe-4S] cluster as a cofactor.

Its subcellular location is the cell membrane. It catalyses the reaction a quinone + NADH + 5 H(+)(in) = a quinol + NAD(+) + 4 H(+)(out). Functionally, NDH-1 shuttles electrons from NADH, via FMN and iron-sulfur (Fe-S) centers, to quinones in the respiratory chain. The immediate electron acceptor for the enzyme in this species is believed to be a menaquinone. Couples the redox reaction to proton translocation (for every two electrons transferred, four hydrogen ions are translocated across the cytoplasmic membrane), and thus conserves the redox energy in a proton gradient. The chain is NADH-quinone oxidoreductase subunit B from Mycolicibacterium gilvum (strain PYR-GCK) (Mycobacterium gilvum (strain PYR-GCK)).